Here is a 140-residue protein sequence, read N- to C-terminus: ATP synthase epsilon chain (140 aa).

The protein belongs to the ATPase epsilon chain family. As to quaternary structure, F-type ATPases have 2 components, CF(1) - the catalytic core - and CF(0) - the membrane proton channel. CF(1) has five subunits: alpha(3), beta(3), gamma(1), delta(1), epsilon(1). CF(0) has three main subunits: a, b and c.

The protein localises to the cell membrane. Functionally, produces ATP from ADP in the presence of a proton gradient across the membrane. This Dehalococcoides mccartyi (strain ATCC BAA-2100 / JCM 16839 / KCTC 5957 / BAV1) protein is ATP synthase epsilon chain.